A 433-amino-acid chain; its full sequence is Tol-Pal system protein TolB (433 aa).

Residues 1–21 (MIKRLRGLLVLLCCVAGMAMA) form the signal peptide.

Belongs to the TolB family. In terms of assembly, the Tol-Pal system is composed of five core proteins: the inner membrane proteins TolA, TolQ and TolR, the periplasmic protein TolB and the outer membrane protein Pal. They form a network linking the inner and outer membranes and the peptidoglycan layer.

Its subcellular location is the periplasm. In terms of biological role, part of the Tol-Pal system, which plays a role in outer membrane invagination during cell division and is important for maintaining outer membrane integrity. In Pseudomonas entomophila (strain L48), this protein is Tol-Pal system protein TolB.